The following is a 354-amino-acid chain: Glycerol-1-phosphate dehydrogenase [NAD(P)+] (354 aa).

Residues Gly103–Asp107 and Thr125–Ser128 contribute to the NAD(+) site. Position 130 (Asp130) interacts with substrate. Ser134 serves as a coordination point for NAD(+). Asp176 provides a ligand contact to substrate. Zn(2+) contacts are provided by Asp176 and His255. His259 contributes to the substrate binding site. His271 contacts Zn(2+).

Belongs to the glycerol-1-phosphate dehydrogenase family. As to quaternary structure, homodimer. Zn(2+) is required as a cofactor.

The protein localises to the cytoplasm. It catalyses the reaction sn-glycerol 1-phosphate + NAD(+) = dihydroxyacetone phosphate + NADH + H(+). It carries out the reaction sn-glycerol 1-phosphate + NADP(+) = dihydroxyacetone phosphate + NADPH + H(+). It functions in the pathway membrane lipid metabolism; glycerophospholipid metabolism. Catalyzes the NAD(P)H-dependent reduction of dihydroxyacetonephosphate (DHAP or glycerone phosphate) to glycerol 1-phosphate (G1P). The G1P thus generated is used as the glycerophosphate backbone of phospholipids in the cellular membranes of Archaea. The polypeptide is Glycerol-1-phosphate dehydrogenase [NAD(P)+] (Nitrosopumilus maritimus (strain SCM1)).